We begin with the raw amino-acid sequence, 728 residues long: 1,4-alpha-glucan branching enzyme GlgB (728 aa).

Catalysis depends on aspartate 405, which acts as the Nucleophile. The active-site Proton donor is glutamate 458.

The protein belongs to the glycosyl hydrolase 13 family. GlgB subfamily. In terms of assembly, monomer.

It catalyses the reaction Transfers a segment of a (1-&gt;4)-alpha-D-glucan chain to a primary hydroxy group in a similar glucan chain.. The protein operates within glycan biosynthesis; glycogen biosynthesis. Functionally, catalyzes the formation of the alpha-1,6-glucosidic linkages in glycogen by scission of a 1,4-alpha-linked oligosaccharide from growing alpha-1,4-glucan chains and the subsequent attachment of the oligosaccharide to the alpha-1,6 position. In Salmonella typhi, this protein is 1,4-alpha-glucan branching enzyme GlgB.